The sequence spans 22 residues: uncharacterized protein (22 aa).

Residues 3-22 (MFITGYDINQKQKKRYGLRG) traverse the membrane as a helical segment.

Belongs to the asfivirus C84L family.

It localises to the host membrane. This is an uncharacterized protein from Ornithodoros (relapsing fever ticks).